The chain runs to 763 residues: Polyribonucleotide nucleotidyltransferase (763 aa).

Mg(2+) contacts are provided by Asp-526 and Asp-532. The 60-residue stretch at 592 to 651 (PRITTIKVPVDKIGEVIGPKGKMINSITEETGAQISIEDDGTVFVGAADGLSAQAAIDKI) folds into the KH domain. The S1 motif domain occupies 663–732 (GERFLGTVVK…NRGKISLVLV (70 aa)). A disordered region spans residues 739 to 763 (SAESAGDKGAEKAEGAAADVTPAEA). Positions 743-752 (AGDKGAEKAE) are enriched in basic and acidic residues.

This sequence belongs to the polyribonucleotide nucleotidyltransferase family. It depends on Mg(2+) as a cofactor.

Its subcellular location is the cytoplasm. It carries out the reaction RNA(n+1) + phosphate = RNA(n) + a ribonucleoside 5'-diphosphate. In terms of biological role, involved in mRNA degradation. Catalyzes the phosphorolysis of single-stranded polyribonucleotides processively in the 3'- to 5'-direction. This is Polyribonucleotide nucleotidyltransferase from Mycolicibacterium smegmatis (strain ATCC 700084 / mc(2)155) (Mycobacterium smegmatis).